Here is an 82-residue protein sequence, read N- to C-terminus: Beta-defensin 113 (82 aa).

The first 16 residues, 1-16 (MKILCIFLTFVFTVSC), serve as a signal peptide directing secretion. Disulfide bonds link Cys35–Cys61, Cys42–Cys56, and Cys46–Cys62.

This sequence belongs to the beta-defensin family.

It localises to the secreted. Has antibacterial activity. This is Beta-defensin 113 (DEFB113) from Homo sapiens (Human).